We begin with the raw amino-acid sequence, 423 residues long: Putative competence-damage inducible protein (423 aa).

The protein belongs to the CinA family.

This chain is Putative competence-damage inducible protein, found in Streptococcus pyogenes serotype M3 (strain ATCC BAA-595 / MGAS315).